We begin with the raw amino-acid sequence, 473 residues long: Flavin-dependent L-tryptophan oxidase RebO (473 aa).

Residues 1–21 (MSRGHKKITVLGAGVAGLVAA) form the signal peptide. Residues 15-16 (VA), 35-36 (EG), Arg-43, 61-64 (GAMR), Glu-444, and 451-456 (AWIDGA) each bind FAD.

Belongs to the flavin monoamine oxidase family. RebO subfamily. In terms of assembly, homodimer. Requires FAD as cofactor.

It catalyses the reaction 7-chloro-L-tryptophan + O2 = 3-(7-chloroindol-3-yl)-2-iminopropanoate + H2O2. It carries out the reaction L-tryptophan + O2 = 2-iminio-3-(indol-3-yl)propanoate + H2O2. Its function is as follows. Involved in the biosynthesis of the indolocarbazole antitumor agent rebeccamycin. It generates the imine form of 7-chloroindole 3-pyruvate (7Cl-IPA) from 7-chloro-L-tryptophan (7Cl-Trp), with concomitant two-electron reduction of O(2) to H(2)O(2). The enzyme is also active with L-tryptophan as substrate. This Lentzea aerocolonigenes (Lechevalieria aerocolonigenes) protein is Flavin-dependent L-tryptophan oxidase RebO (rebO).